A 442-amino-acid chain; its full sequence is tRNA-2-methylthio-N(6)-dimethylallyladenosine synthase (442 aa).

The MTTase N-terminal domain occupies K2–T120. [4Fe-4S] cluster-binding residues include C11, C49, C83, C157, C161, and C164. In terms of domain architecture, Radical SAM core spans R143–R375. A TRAM domain is found at Q378–E441.

It belongs to the methylthiotransferase family. MiaB subfamily. Monomer. It depends on [4Fe-4S] cluster as a cofactor.

Its subcellular location is the cytoplasm. It carries out the reaction N(6)-dimethylallyladenosine(37) in tRNA + (sulfur carrier)-SH + AH2 + 2 S-adenosyl-L-methionine = 2-methylsulfanyl-N(6)-dimethylallyladenosine(37) in tRNA + (sulfur carrier)-H + 5'-deoxyadenosine + L-methionine + A + S-adenosyl-L-homocysteine + 2 H(+). Functionally, catalyzes the methylthiolation of N6-(dimethylallyl)adenosine (i(6)A), leading to the formation of 2-methylthio-N6-(dimethylallyl)adenosine (ms(2)i(6)A) at position 37 in tRNAs that read codons beginning with uridine. The protein is tRNA-2-methylthio-N(6)-dimethylallyladenosine synthase of Neisseria meningitidis serogroup A / serotype 4A (strain DSM 15465 / Z2491).